A 210-amino-acid chain; its full sequence is MQTRKVYLYVFHTMSDWEYGYLIAELNSGRYFKQDAASLKVVTVGVNKEMITTLGGLSIKPDISLDECTLGSQDLIILPGGNTWGEDIHQPILKKVGDALKLGTTIAAICGATLGLANEGYLNSRKHTSNDLDYMNMVCPNYKGETFYEKGPAVSDENLVTASGIAPLEFAVEVLKKLDVFAPDTLRSWYKLNKTQKPEYFFELMNTINR.

The PfpI endopeptidase domain maps to 4-180; that stretch reads RKVYLYVFHT…AVEVLKKLDV (177 aa). Cys-110 acts as the Nucleophile in catalysis.

This sequence belongs to the peptidase C56 family.

This is an uncharacterized protein from Bacillus subtilis (strain 168).